The sequence spans 112 residues: Putative transposase YkgN (112 aa).

The protein belongs to the transposase 8 family.

This Escherichia coli (strain K12) protein is Putative transposase YkgN (ykgN).